The following is a 342-amino-acid chain: Dihydroorotase (342 aa).

Zn(2+)-binding residues include His-13 and His-15. Residues 15-17 and Asn-41 each bind substrate; that span reads HLR. Positions 98, 135, and 173 each coordinate Zn(2+). Residue Lys-98 is modified to N6-carboxylysine. His-135 contacts substrate. Leu-218 provides a ligand contact to substrate. Asp-246 lines the Zn(2+) pocket. The active site involves Asp-246. Substrate contacts are provided by His-250 and Ala-262.

Belongs to the metallo-dependent hydrolases superfamily. DHOase family. Class II DHOase subfamily. In terms of assembly, homodimer. It depends on Zn(2+) as a cofactor.

The catalysed reaction is (S)-dihydroorotate + H2O = N-carbamoyl-L-aspartate + H(+). Its pathway is pyrimidine metabolism; UMP biosynthesis via de novo pathway; (S)-dihydroorotate from bicarbonate: step 3/3. Catalyzes the reversible cyclization of carbamoyl aspartate to dihydroorotate. The polypeptide is Dihydroorotase (Aliivibrio fischeri (strain ATCC 700601 / ES114) (Vibrio fischeri)).